Here is a 240-residue protein sequence, read N- to C-terminus: Pyridoxine 5'-phosphate synthase (240 aa).

Position 6 (N6) interacts with 3-amino-2-oxopropyl phosphate. D8–H9 serves as a coordination point for 1-deoxy-D-xylulose 5-phosphate. R17 serves as a coordination point for 3-amino-2-oxopropyl phosphate. H42 functions as the Proton acceptor in the catalytic mechanism. Residues R44 and H49 each coordinate 1-deoxy-D-xylulose 5-phosphate. The active-site Proton acceptor is E69. T99 provides a ligand contact to 1-deoxy-D-xylulose 5-phosphate. H190 serves as the catalytic Proton donor. Residues G191 and G212–H213 contribute to the 3-amino-2-oxopropyl phosphate site.

Belongs to the PNP synthase family. In terms of assembly, homooctamer; tetramer of dimers.

The protein localises to the cytoplasm. The catalysed reaction is 3-amino-2-oxopropyl phosphate + 1-deoxy-D-xylulose 5-phosphate = pyridoxine 5'-phosphate + phosphate + 2 H2O + H(+). It participates in cofactor biosynthesis; pyridoxine 5'-phosphate biosynthesis; pyridoxine 5'-phosphate from D-erythrose 4-phosphate: step 5/5. Its function is as follows. Catalyzes the complicated ring closure reaction between the two acyclic compounds 1-deoxy-D-xylulose-5-phosphate (DXP) and 3-amino-2-oxopropyl phosphate (1-amino-acetone-3-phosphate or AAP) to form pyridoxine 5'-phosphate (PNP) and inorganic phosphate. This is Pyridoxine 5'-phosphate synthase from Pseudomonas putida (strain ATCC 700007 / DSM 6899 / JCM 31910 / BCRC 17059 / LMG 24140 / F1).